The primary structure comprises 451 residues: UDP-N-acetylmuramoylalanine--D-glutamate ligase (451 aa).

Residue 120–126 participates in ATP binding; sequence GSNGKTT.

This sequence belongs to the MurCDEF family.

The protein localises to the cytoplasm. It catalyses the reaction UDP-N-acetyl-alpha-D-muramoyl-L-alanine + D-glutamate + ATP = UDP-N-acetyl-alpha-D-muramoyl-L-alanyl-D-glutamate + ADP + phosphate + H(+). It functions in the pathway cell wall biogenesis; peptidoglycan biosynthesis. Cell wall formation. Catalyzes the addition of glutamate to the nucleotide precursor UDP-N-acetylmuramoyl-L-alanine (UMA). This chain is UDP-N-acetylmuramoylalanine--D-glutamate ligase (murD), found in Bacillus subtilis (strain 168).